Reading from the N-terminus, the 132-residue chain is Small ribosomal subunit protein uS8 (132 aa).

This sequence belongs to the universal ribosomal protein uS8 family. In terms of assembly, part of the 30S ribosomal subunit. Contacts proteins S5 and S12.

In terms of biological role, one of the primary rRNA binding proteins, it binds directly to 16S rRNA central domain where it helps coordinate assembly of the platform of the 30S subunit. This is Small ribosomal subunit protein uS8 from Bacillus anthracis (strain A0248).